Reading from the N-terminus, the 406-residue chain is S-adenosylmethionine synthase (406 aa).

140–145 (GRGSVD) is an ATP binding site.

The protein belongs to the AdoMet synthase 2 family. The cofactor is Mg(2+).

The enzyme catalyses L-methionine + ATP + H2O = S-adenosyl-L-methionine + phosphate + diphosphate. It participates in amino-acid biosynthesis; S-adenosyl-L-methionine biosynthesis; S-adenosyl-L-methionine from L-methionine: step 1/1. In terms of biological role, catalyzes the formation of S-adenosylmethionine from methionine and ATP. The polypeptide is S-adenosylmethionine synthase (mat) (Aeropyrum pernix (strain ATCC 700893 / DSM 11879 / JCM 9820 / NBRC 100138 / K1)).